The following is a 974-amino-acid chain: Receptor-like protein 7 (974 aa).

The signal sequence occupies residues 1–24; it reads MSFLIRSICFLILIPSFLITFVSA. The Extracellular segment spans residues 25–930; sequence TQHLCHSDQK…EEEEEESFSW (906 aa). Residues asparagine 54 and asparagine 90 are each glycosylated (N-linked (GlcNAc...) asparagine). LRR repeat units lie at residues 96–120, 122–145, 147–166, 181–204, 206–229, and 230–252; these read LRHL…EFDK, TGLE…LLQL, KLVS…SFHY, LRNL…EFSN, RSLR…ILLI, and PNLQ…VFHE. Asparagine 253 is a glycosylation site (N-linked (GlcNAc...) asparagine). LRR repeat units lie at residues 254 to 277, 278 to 301, 302 to 325, 327 to 349, and 350 to 373; these read NSLL…ISSL, KNLT…LGNL, SHLS…IGNL, QLTN…LSNL, and TKLN…ISQL. Asparagine 279 and asparagine 300 each carry an N-linked (GlcNAc...) asparagine glycan. Residue asparagine 348 is glycosylated (N-linked (GlcNAc...) asparagine). An LRR 12; degenerate repeat occupies 374 to 396; it reads SKLKFFFADDNPFIGAILSPLLK. LRR repeat units lie at residues 397-422, 425-448, 454-472, 473-495, 496-519, 521-542, 544-570, 572-589, 590-616, 618-638, 639-662, 664-685, 687-712, 713-737, 785-809, 810-833, 834-857, and 859-882; these read IPSL…IFML, LETF…VFSS, TLYI…SDFP, SNLE…IRKG, RNLQ…LWRM, TLNS…VKAS, ESQL…SLRY, SGSN…ICGL, SSLE…LMSS, SDLD…FMNA, TKLR…LTGC, SLEV…ELNS, QKLQ…VWFG, FPQL…YFMN, LTIY…IGLL, KELR…LANL, KNLE…LGTL, and SLAW…QFQR. N-linked (GlcNAc...) asparagine glycosylation is found at asparagine 434, asparagine 466, and asparagine 484. An N-linked (GlcNAc...) asparagine glycan is attached at asparagine 529. Residues asparagine 577, asparagine 603, asparagine 624, and asparagine 637 are each glycosylated (N-linked (GlcNAc...) asparagine). N-linked (GlcNAc...) asparagine glycosylation occurs at asparagine 737. N-linked (GlcNAc...) asparagine glycosylation is found at asparagine 816, asparagine 845, and asparagine 864. The interval 899-923 is disordered; the sequence is LENVCGHIKESTPTQTEPLETKEEE. The helical transmembrane segment at 931 to 951 threads the bilayer; that stretch reads IAAGLGFAPGVVFGLAMGYIV. Residues 952 to 974 are Cytoplasmic-facing; it reads VSYKHQWFMKTFGRSKQQNTRTR.

Belongs to the RLP family.

It is found in the cell membrane. The protein is Receptor-like protein 7 of Arabidopsis thaliana (Mouse-ear cress).